The following is a 372-amino-acid chain: DNA replication and repair protein RecF (372 aa).

An ATP-binding site is contributed by 30–37 (GENGQGKT).

The protein belongs to the RecF family.

It is found in the cytoplasm. Its function is as follows. The RecF protein is involved in DNA metabolism; it is required for DNA replication and normal SOS inducibility. RecF binds preferentially to single-stranded, linear DNA. It also seems to bind ATP. In Anaeromyxobacter dehalogenans (strain 2CP-1 / ATCC BAA-258), this protein is DNA replication and repair protein RecF.